We begin with the raw amino-acid sequence, 310 residues long: Ribosomal RNA small subunit methyltransferase H (310 aa).

Residues 32 to 34, aspartate 52, phenylalanine 79, aspartate 100, and glutamine 107 contribute to the S-adenosyl-L-methionine site; that span reads AGH.

This sequence belongs to the methyltransferase superfamily. RsmH family.

It localises to the cytoplasm. It carries out the reaction cytidine(1402) in 16S rRNA + S-adenosyl-L-methionine = N(4)-methylcytidine(1402) in 16S rRNA + S-adenosyl-L-homocysteine + H(+). Specifically methylates the N4 position of cytidine in position 1402 (C1402) of 16S rRNA. In Halalkalibacterium halodurans (strain ATCC BAA-125 / DSM 18197 / FERM 7344 / JCM 9153 / C-125) (Bacillus halodurans), this protein is Ribosomal RNA small subunit methyltransferase H.